The primary structure comprises 90 residues: uncharacterized protein (90 aa).

This is an uncharacterized protein from Archaeoglobus fulgidus (strain ATCC 49558 / DSM 4304 / JCM 9628 / NBRC 100126 / VC-16).